Here is an 800-residue protein sequence, read N- to C-terminus: Protein PET111, mitochondrial (800 aa).

This sequence to yeast YHR160C.

The protein localises to the mitochondrion matrix. Required for translation of the mitochondrial gene for cytochrome c oxidase subunit II (COX2). The sequence is that of Protein PET111, mitochondrial (PET111) from Saccharomyces cerevisiae (strain ATCC 204508 / S288c) (Baker's yeast).